The sequence spans 476 residues: Cytosolic iron-sulfur assembly component 3 (476 aa).

Position 2 is an N-acetylalanine (Ala-2). Cys-24, Cys-71, Cys-74, Cys-77, Cys-190, Cys-246, Cys-395, and Cys-399 together coordinate [4Fe-4S] cluster.

Belongs to the NARF family. External component of the CIA complex. In the CIA complex, interacts directly with CIAO1 and MMS19.

In terms of biological role, component of the cytosolic iron-sulfur protein assembly (CIA) complex, a multiprotein complex that mediates the incorporation of iron-sulfur cluster into extramitochondrial Fe/S proteins. Seems to negatively regulate the level of HIF1A expression, although this effect could be indirect. In Bos taurus (Bovine), this protein is Cytosolic iron-sulfur assembly component 3.